The following is a 179-amino-acid chain: Large ribosomal subunit protein uL5 (179 aa).

Belongs to the universal ribosomal protein uL5 family. In terms of assembly, part of the 50S ribosomal subunit; part of the 5S rRNA/L5/L18/L25 subcomplex. Contacts the 5S rRNA and the P site tRNA. Forms a bridge to the 30S subunit in the 70S ribosome.

Functionally, this is one of the proteins that bind and probably mediate the attachment of the 5S RNA into the large ribosomal subunit, where it forms part of the central protuberance. In the 70S ribosome it contacts protein S13 of the 30S subunit (bridge B1b), connecting the 2 subunits; this bridge is implicated in subunit movement. Contacts the P site tRNA; the 5S rRNA and some of its associated proteins might help stabilize positioning of ribosome-bound tRNAs. The polypeptide is Large ribosomal subunit protein uL5 (Vibrio parahaemolyticus serotype O3:K6 (strain RIMD 2210633)).